A 444-amino-acid chain; its full sequence is Serine--tRNA ligase (444 aa).

243–245 (TAE) contacts L-serine. 274–276 (RSE) provides a ligand contact to ATP. Glu297 provides a ligand contact to L-serine. 361–364 (EISS) contributes to the ATP binding site. Ser397 serves as a coordination point for L-serine.

The protein belongs to the class-II aminoacyl-tRNA synthetase family. Type-1 seryl-tRNA synthetase subfamily. In terms of assembly, homodimer. The tRNA molecule binds across the dimer.

It is found in the cytoplasm. It catalyses the reaction tRNA(Ser) + L-serine + ATP = L-seryl-tRNA(Ser) + AMP + diphosphate + H(+). The catalysed reaction is tRNA(Sec) + L-serine + ATP = L-seryl-tRNA(Sec) + AMP + diphosphate + H(+). The protein operates within aminoacyl-tRNA biosynthesis; selenocysteinyl-tRNA(Sec) biosynthesis; L-seryl-tRNA(Sec) from L-serine and tRNA(Sec): step 1/1. In terms of biological role, catalyzes the attachment of serine to tRNA(Ser). Is also able to aminoacylate tRNA(Sec) with serine, to form the misacylated tRNA L-seryl-tRNA(Sec), which will be further converted into selenocysteinyl-tRNA(Sec). The chain is Serine--tRNA ligase from Acidobacterium capsulatum (strain ATCC 51196 / DSM 11244 / BCRC 80197 / JCM 7670 / NBRC 15755 / NCIMB 13165 / 161).